A 539-amino-acid polypeptide reads, in one-letter code: GMP synthase [glutamine-hydrolyzing] (539 aa).

Residues 4–202 (KILILDFGSQ…VLQIAGAKPD (199 aa)) form the Glutamine amidotransferase type-1 domain. C81 acts as the Nucleophile in catalysis. Active-site residues include H176 and E178. Residues 203 to 395 (WIMKNHIEEA…LGLPPEMVYR (193 aa)) form the GMPS ATP-PPase domain. Residue 230-236 (SGGVDSS) coordinates ATP.

In terms of assembly, homodimer.

The catalysed reaction is XMP + L-glutamine + ATP + H2O = GMP + L-glutamate + AMP + diphosphate + 2 H(+). It participates in purine metabolism; GMP biosynthesis; GMP from XMP (L-Gln route): step 1/1. In terms of biological role, catalyzes the synthesis of GMP from XMP. This is GMP synthase [glutamine-hydrolyzing] from Burkholderia vietnamiensis (strain G4 / LMG 22486) (Burkholderia cepacia (strain R1808)).